Reading from the N-terminus, the 872-residue chain is Alanine--tRNA ligase (872 aa).

4 residues coordinate Zn(2+): H566, H570, C668, and H672.

This sequence belongs to the class-II aminoacyl-tRNA synthetase family. Zn(2+) serves as cofactor.

The protein localises to the cytoplasm. The catalysed reaction is tRNA(Ala) + L-alanine + ATP = L-alanyl-tRNA(Ala) + AMP + diphosphate. Functionally, catalyzes the attachment of alanine to tRNA(Ala) in a two-step reaction: alanine is first activated by ATP to form Ala-AMP and then transferred to the acceptor end of tRNA(Ala). Also edits incorrectly charged Ser-tRNA(Ala) and Gly-tRNA(Ala) via its editing domain. In Lactococcus lactis subsp. cremoris (strain SK11), this protein is Alanine--tRNA ligase.